The chain runs to 380 residues: Cytochrome b (380 aa).

4 helical membrane-spanning segments follow: residues 34–54, 78–99, 114–134, and 179–199; these read FGSLLGICLLTQILTGLLLAT, WLIRNLHANGASFFFICIYLHI, WNTGVILLLALMATAFVGYVL, and FFALHFLLPFMIAGLAFIHLT. 2 residues coordinate heme b: H84 and H98. Heme b is bound by residues H183 and H197. H202 serves as a coordination point for a ubiquinone. The next 4 helical transmembrane spans lie at 227 to 247, 289 to 309, 321 to 341, and 348 to 368; these read LKDILGFIIMFLPLTTLALFS, LGGVLALAASVLVLFLTPLLH, LSQLLFWTLVANLLILTWVGS, and FIIIGQLASLAYFTILLLLFP.

It belongs to the cytochrome b family. In terms of assembly, the cytochrome bc1 complex contains 11 subunits: 3 respiratory subunits (MT-CYB, CYC1 and UQCRFS1), 2 core proteins (UQCRC1 and UQCRC2) and 6 low-molecular weight proteins (UQCRH/QCR6, UQCRB/QCR7, UQCRQ/QCR8, UQCR10/QCR9, UQCR11/QCR10 and a cleavage product of UQCRFS1). This cytochrome bc1 complex then forms a dimer. Heme b serves as cofactor.

The protein resides in the mitochondrion inner membrane. Its function is as follows. Component of the ubiquinol-cytochrome c reductase complex (complex III or cytochrome b-c1 complex) that is part of the mitochondrial respiratory chain. The b-c1 complex mediates electron transfer from ubiquinol to cytochrome c. Contributes to the generation of a proton gradient across the mitochondrial membrane that is then used for ATP synthesis. The chain is Cytochrome b (MT-CYB) from Uria lomvia (Thick-billed murre).